The following is a 147-amino-acid chain: D-aminoacyl-tRNA deacylase (147 aa).

A Gly-cisPro motif, important for rejection of L-amino acids motif is present at residues 136 to 137 (GP).

It belongs to the DTD family. Homodimer.

It localises to the cytoplasm. It catalyses the reaction glycyl-tRNA(Ala) + H2O = tRNA(Ala) + glycine + H(+). The catalysed reaction is a D-aminoacyl-tRNA + H2O = a tRNA + a D-alpha-amino acid + H(+). Its function is as follows. An aminoacyl-tRNA editing enzyme that deacylates mischarged D-aminoacyl-tRNAs. Also deacylates mischarged glycyl-tRNA(Ala), protecting cells against glycine mischarging by AlaRS. Acts via tRNA-based rather than protein-based catalysis; rejects L-amino acids rather than detecting D-amino acids in the active site. By recycling D-aminoacyl-tRNA to D-amino acids and free tRNA molecules, this enzyme counteracts the toxicity associated with the formation of D-aminoacyl-tRNA entities in vivo and helps enforce protein L-homochirality. The polypeptide is D-aminoacyl-tRNA deacylase (Sulfurihydrogenibium sp. (strain YO3AOP1)).